The sequence spans 160 residues: SsrA-binding protein (160 aa).

It belongs to the SmpB family.

It localises to the cytoplasm. Required for rescue of stalled ribosomes mediated by trans-translation. Binds to transfer-messenger RNA (tmRNA), required for stable association of tmRNA with ribosomes. tmRNA and SmpB together mimic tRNA shape, replacing the anticodon stem-loop with SmpB. tmRNA is encoded by the ssrA gene; the 2 termini fold to resemble tRNA(Ala) and it encodes a 'tag peptide', a short internal open reading frame. During trans-translation Ala-aminoacylated tmRNA acts like a tRNA, entering the A-site of stalled ribosomes, displacing the stalled mRNA. The ribosome then switches to translate the ORF on the tmRNA; the nascent peptide is terminated with the 'tag peptide' encoded by the tmRNA and targeted for degradation. The ribosome is freed to recommence translation, which seems to be the essential function of trans-translation. This Citrobacter koseri (strain ATCC BAA-895 / CDC 4225-83 / SGSC4696) protein is SsrA-binding protein.